We begin with the raw amino-acid sequence, 206 residues long: Small ribosomal subunit protein uS4c (206 aa).

The S4 RNA-binding domain occupies 93-161; the sequence is MRLDNIVYRL…IEKNIELLDK (69 aa).

It belongs to the universal ribosomal protein uS4 family. As to quaternary structure, part of the 30S ribosomal subunit. Contacts protein S5. The interaction surface between S4 and S5 is involved in control of translational fidelity.

It localises to the plastid. In terms of biological role, one of the primary rRNA binding proteins, it binds directly to 16S rRNA where it nucleates assembly of the body of the 30S subunit. Its function is as follows. With S5 and S12 plays an important role in translational accuracy. This Euglena longa (Euglenophycean alga) protein is Small ribosomal subunit protein uS4c (rps4).